Here is a 71-residue protein sequence, read N- to C-terminus: NAD(P)H-quinone oxidoreductase subunit O (71 aa).

The protein belongs to the complex I NdhO subunit family. NDH-1 can be composed of about 15 different subunits; different subcomplexes with different compositions have been identified which probably have different functions.

The protein resides in the cellular thylakoid membrane. It carries out the reaction a plastoquinone + NADH + (n+1) H(+)(in) = a plastoquinol + NAD(+) + n H(+)(out). The enzyme catalyses a plastoquinone + NADPH + (n+1) H(+)(in) = a plastoquinol + NADP(+) + n H(+)(out). Functionally, NDH-1 shuttles electrons from an unknown electron donor, via FMN and iron-sulfur (Fe-S) centers, to quinones in the respiratory and/or the photosynthetic chain. The immediate electron acceptor for the enzyme in this species is believed to be plastoquinone. Couples the redox reaction to proton translocation, and thus conserves the redox energy in a proton gradient. Cyanobacterial NDH-1 also plays a role in inorganic carbon-concentration. This chain is NAD(P)H-quinone oxidoreductase subunit O, found in Microcystis aeruginosa (strain NIES-843 / IAM M-2473).